The primary structure comprises 934 residues: Serine/threonine-protein kinase atg1 (934 aa).

The 307-residue stretch at 22–328 folds into the Protein kinase domain; sequence YTRLDEIGRG…SDFFDCDTIT (307 aa). ATP-binding positions include 28 to 36 and K51; that span reads IGRGSFATV. The active-site Proton acceptor is D165. 6 disordered regions span residues 335–432, 462–481, 531–580, 684–703, 800–822, and 878–900; these read IADD…PRRP, RNTY…TKEE, RRPG…YGQS, TDPS…TDLT, RLPP…GSGA, and EEEE…RRDG. Residues 340-368 are compositionally biased toward polar residues; sequence PSTSRRSSVAVNTSGSTSRPQSRTGSRTP. The span at 371-386 shows a compositional bias: basic and acidic residues; that stretch reads MKREKDASYPGKKDDQ. Residues 538 to 550 show a composition bias toward low complexity; that stretch reads SSTATATSPLATT. Basic and acidic residues predominate over residues 561–577; that stretch reads ARADSTHTRQGSYERRY.

Belongs to the protein kinase superfamily. Ser/Thr protein kinase family. APG1/unc-51/ULK1 subfamily. In terms of assembly, homodimer. Forms a ternary complex with ATG13 and ATG17.

It localises to the cytoplasm. The protein resides in the preautophagosomal structure membrane. The catalysed reaction is L-seryl-[protein] + ATP = O-phospho-L-seryl-[protein] + ADP + H(+). The enzyme catalyses L-threonyl-[protein] + ATP = O-phospho-L-threonyl-[protein] + ADP + H(+). In terms of biological role, serine/threonine protein kinase involved in the cytoplasm to vacuole transport (Cvt) and found to be essential in autophagy, where it is required for the formation of autophagosomes. Involved in the clearance of protein aggregates which cannot be efficiently cleared by the proteasome. Required for selective autophagic degradation of the nucleus (nucleophagy) as well as for mitophagy which contributes to regulate mitochondrial quantity and quality by eliminating the mitochondria to a basal level to fulfill cellular energy requirements and preventing excess ROS production. Also involved in endoplasmic reticulum-specific autophagic process, in selective removal of ER-associated degradation (ERAD) substrates. Plays a key role in ATG9 and ATG23 cycling through the pre-autophagosomal structure and is necessary to promote ATG18 binding to ATG9 through phosphorylation of ATG9. Catalyzes phosphorylation of ATG4, decreasing the interaction between ATG4 and ATG8 and impairing deconjugation of PE-conjugated forms of ATG8. Required for conidiation and development of aerial hyphae. The sequence is that of Serine/threonine-protein kinase atg1 from Aspergillus oryzae (strain ATCC 42149 / RIB 40) (Yellow koji mold).